The primary structure comprises 374 residues: uncharacterized protein (374 aa).

The protein belongs to the mimivirus R640 family.

It is found in the virion. This is an uncharacterized protein from Acanthamoeba polyphaga (Amoeba).